A 672-amino-acid polypeptide reads, in one-letter code: ABC transporter G family member 21 (672 aa).

Residues 1-35 are compositionally biased toward polar residues; it reads MMPPNEQESSFPKTPSANRHETSPVQENRFSSPSH. The segment at 1–59 is disordered; that stretch reads MMPPNEQESSFPKTPSANRHETSPVQENRFSSPSHVNPCLDDDNDHDGPSHQSRQSSVL. Residues 50-59 show a composition bias toward low complexity; it reads SHQSRQSSVL. One can recognise an ABC transporter domain in the interval 68 to 322; it reads LKFEELTYSI…FGSIGYQPGS (255 aa). 117–124 is a binding site for ATP; the sequence is GPSGSGKT. The 207-residue stretch at 411 to 617 folds into the ABC transmembrane type-2 domain; the sequence is MQFSVLLKRG…CYKLLVGVQY (207 aa). 6 helical membrane passes run 429 to 449, 460 to 480, 512 to 532, 543 to 563, 576 to 596, and 649 to 669; these read FSGLRIFMVMSVSLLSGLLWW, VGLLFFFSIFWGFFPLFNAIF, LPMELILPTIFVTITYWMGGL, LMIVLYNVLVAQGVGLALGAI, VLMLVFLLAGGYYIQHIPGFI, and WDVLALAVMLLLYRVLAYLAL.

Belongs to the ABC transporter superfamily. ABCG family. Eye pigment precursor importer (TC 3.A.1.204) subfamily.

The protein resides in the membrane. In Arabidopsis thaliana (Mouse-ear cress), this protein is ABC transporter G family member 21 (ABCG21).